A 340-amino-acid chain; its full sequence is Glyceraldehyde-3-phosphate dehydrogenase (340 aa).

NAD(+)-binding positions include 13–14 and G112; that span reads TI. 141–143 contacts D-glyceraldehyde 3-phosphate; that stretch reads SCN. C142 serves as the catalytic Nucleophile. Position 170 (R170) interacts with NAD(+). 196-197 contributes to the D-glyceraldehyde 3-phosphate binding site; sequence HG. Q302 provides a ligand contact to NAD(+).

The protein belongs to the glyceraldehyde-3-phosphate dehydrogenase family. As to quaternary structure, homotetramer.

The protein localises to the cytoplasm. The enzyme catalyses D-glyceraldehyde 3-phosphate + phosphate + NADP(+) = (2R)-3-phospho-glyceroyl phosphate + NADPH + H(+). It catalyses the reaction D-glyceraldehyde 3-phosphate + phosphate + NAD(+) = (2R)-3-phospho-glyceroyl phosphate + NADH + H(+). Its pathway is carbohydrate degradation; glycolysis; pyruvate from D-glyceraldehyde 3-phosphate: step 1/5. The polypeptide is Glyceraldehyde-3-phosphate dehydrogenase (gap) (Archaeoglobus fulgidus (strain ATCC 49558 / DSM 4304 / JCM 9628 / NBRC 100126 / VC-16)).